We begin with the raw amino-acid sequence, 187 residues long: Meiotically up-regulated protein C1442.13c (187 aa).

2 disordered regions span residues 15–46 (QWENVEASPKPPPRKPKIVQPKKKPSKHLSNE) and 119–145 (IQEGSVSTNTKKRMDGHVVGSSAPAIN). The segment covering 26–41 (PPRKPKIVQPKKKPSK) has biased composition (basic residues). The region spanning 145-187 (NNGKGKQLLEMMGWSRGKGLGSENQGMVDPVVAVVKNNKQGLH) is the G-patch domain.

It localises to the nucleus. Its subcellular location is the cytoplasm. The protein resides in the cytoskeleton. The protein localises to the microtubule organizing center. It is found in the spindle pole body. Its function is as follows. Has a role in meiosis and sporulation. Required for meiotic chromosome segregation. The sequence is that of Meiotically up-regulated protein C1442.13c from Schizosaccharomyces pombe (strain 972 / ATCC 24843) (Fission yeast).